A 149-amino-acid chain; its full sequence is Transcriptional repressor NrdR (149 aa).

Residues 3 to 34 (CPFCSATDTKVIDSRLVADGHQVRRRRECVQC) fold into a zinc finger. The 91-residue stretch at 49-139 (PRVVKQDGSR…VYRAFEDVSE (91 aa)) folds into the ATP-cone domain.

Belongs to the NrdR family. It depends on Zn(2+) as a cofactor.

Functionally, negatively regulates transcription of bacterial ribonucleotide reductase nrd genes and operons by binding to NrdR-boxes. The chain is Transcriptional repressor NrdR from Shewanella halifaxensis (strain HAW-EB4).